Reading from the N-terminus, the 1922-residue chain is Kinesin-related protein 4 (1922 aa).

The Kinesin motor domain maps to Lys-22–Val-343. Gly-101–Thr-108 is an ATP binding site. A disordered region spans residues Gln-448–Leu-538. Residues Ser-456–Ser-468 show a composition bias toward low complexity. 2 stretches are compositionally biased toward acidic residues: residues Gly-469–Asn-480 and Asp-488–Phe-532. Residues Gln-562–Leu-1712 adopt a coiled-coil conformation. A disordered region spans residues Thr-1887 to Asn-1922.

It belongs to the TRAFAC class myosin-kinesin ATPase superfamily. Kinesin family.

It is found in the cytoplasm. The protein localises to the cytoskeleton. In terms of biological role, microtubule-associated force-producing protein that plays a role in organelle transport. Its motor activity is directed toward the microtubule's plus end. Cooperates with dynein in organizing spindle assembly during cell division. This chain is Kinesin-related protein 4 (kif4), found in Dictyostelium discoideum (Social amoeba).